The sequence spans 439 residues: NAD kinase (439 aa).

Phosphoserine occurs at positions 46, 48, 50, 55, and 64.

This sequence belongs to the NAD kinase family. It depends on a divalent metal cation as a cofactor.

It carries out the reaction NAD(+) + ATP = ADP + NADP(+) + H(+). The chain is NAD kinase (Nadk) from Mus musculus (Mouse).